A 122-amino-acid chain; its full sequence is Large ribosomal subunit protein uL14c (122 aa).

The protein belongs to the universal ribosomal protein uL14 family. As to quaternary structure, part of the 50S ribosomal subunit.

It localises to the plastid. The protein localises to the chloroplast. In terms of biological role, binds to 23S rRNA. This is Large ribosomal subunit protein uL14c from Pinus koraiensis (Korean pine).